The sequence spans 139 residues: MKKTKLLNASLSHHIATLGHTESLVICDAGLPISNQVERIDLALEAGVPGFLQTVDVVISEMFVEHAVVAKEIREKNPQIHDALLDSLRKLSEQQGNCIAVEYVEHEEFKVLSSESKVAVCTGEFSPYANIILYSGVPF.

Residue His20 is the Proton donor of the active site. Substrate-binding positions include Asp28, His106, and 128 to 130; that span reads YAN.

This sequence belongs to the RbsD / FucU family. RbsD subfamily. As to quaternary structure, homodecamer.

The protein resides in the cytoplasm. It carries out the reaction beta-D-ribopyranose = beta-D-ribofuranose. The protein operates within carbohydrate metabolism; D-ribose degradation; D-ribose 5-phosphate from beta-D-ribopyranose: step 1/2. Its function is as follows. Catalyzes the interconversion of beta-pyran and beta-furan forms of D-ribose. The protein is D-ribose pyranase of Histophilus somni (strain 129Pt) (Haemophilus somnus).